Consider the following 431-residue polypeptide: Serine--tRNA ligase (431 aa).

An L-serine-binding site is contributed by 238 to 240 (TSE). 269–271 (RSE) is a binding site for ATP. Glutamate 292 provides a ligand contact to L-serine. 356 to 359 (EISS) contributes to the ATP binding site. L-serine is bound at residue serine 391.

It belongs to the class-II aminoacyl-tRNA synthetase family. Type-1 seryl-tRNA synthetase subfamily. In terms of assembly, homodimer. The tRNA molecule binds across the dimer.

It is found in the cytoplasm. It catalyses the reaction tRNA(Ser) + L-serine + ATP = L-seryl-tRNA(Ser) + AMP + diphosphate + H(+). The catalysed reaction is tRNA(Sec) + L-serine + ATP = L-seryl-tRNA(Sec) + AMP + diphosphate + H(+). Its pathway is aminoacyl-tRNA biosynthesis; selenocysteinyl-tRNA(Sec) biosynthesis; L-seryl-tRNA(Sec) from L-serine and tRNA(Sec): step 1/1. Functionally, catalyzes the attachment of serine to tRNA(Ser). Is also able to aminoacylate tRNA(Sec) with serine, to form the misacylated tRNA L-seryl-tRNA(Sec), which will be further converted into selenocysteinyl-tRNA(Sec). This is Serine--tRNA ligase from Leptothrix cholodnii (strain ATCC 51168 / LMG 8142 / SP-6) (Leptothrix discophora (strain SP-6)).